Here is a 236-residue protein sequence, read N- to C-terminus: uncharacterized protein (236 aa).

Positions 1 to 69 (MLKYQQIATE…RGSGIFVRKH (69 aa)) constitute an HTH gntR-type domain. The segment at residues 29 to 48 (LETLMAQFEVSKSTITKSLE) is a DNA-binding region (H-T-H motif).

This is an uncharacterized protein from Bacillus subtilis (strain 168).